The chain runs to 70 residues: MKPNIHPEYKNITLTCSTCEKKHIFGSTAKKSSVDVCSNCHPFFTGDRSIQRTTGRVDRFNRRLTKSAEK.

It belongs to the bacterial ribosomal protein bL31 family. Type A subfamily. In terms of assembly, part of the 50S ribosomal subunit.

Functionally, binds the 23S rRNA. The chain is Large ribosomal subunit protein bL31 from Mycoplasma mobile (strain ATCC 43663 / 163K / NCTC 11711) (Mesomycoplasma mobile).